Reading from the N-terminus, the 366-residue chain is Phospho-N-acetylmuramoyl-pentapeptide-transferase (366 aa).

A run of 10 helical transmembrane segments spans residues 3 to 23 (QIFI…PVLI), 54 to 74 (GIAV…VGLV), 80 to 100 (PGVS…LGFA), 120 to 140 (LVGQ…FPNA), 161 to 181 (IAIG…YLVI), 197 to 217 (LASG…FWQF), 238 to 258 (LSML…WNAA), 262 to 282 (IFMG…LSVT), 288 to 308 (LMIL…IQVV), and 341 to 361 (FWLL…AEWL).

It belongs to the glycosyltransferase 4 family. MraY subfamily. Mg(2+) serves as cofactor.

The protein resides in the cell membrane. It carries out the reaction UDP-N-acetyl-alpha-D-muramoyl-L-alanyl-gamma-D-glutamyl-meso-2,6-diaminopimeloyl-D-alanyl-D-alanine + di-trans,octa-cis-undecaprenyl phosphate = di-trans,octa-cis-undecaprenyl diphospho-N-acetyl-alpha-D-muramoyl-L-alanyl-D-glutamyl-meso-2,6-diaminopimeloyl-D-alanyl-D-alanine + UMP. Its pathway is cell wall biogenesis; peptidoglycan biosynthesis. Catalyzes the initial step of the lipid cycle reactions in the biosynthesis of the cell wall peptidoglycan: transfers peptidoglycan precursor phospho-MurNAc-pentapeptide from UDP-MurNAc-pentapeptide onto the lipid carrier undecaprenyl phosphate, yielding undecaprenyl-pyrophosphoryl-MurNAc-pentapeptide, known as lipid I. In Corynebacterium jeikeium (strain K411), this protein is Phospho-N-acetylmuramoyl-pentapeptide-transferase.